The chain runs to 285 residues: Nucleotide-binding protein NTHI1314 (285 aa).

8–15 (GRSGAGKS) contributes to the ATP binding site. 56–59 (DIRN) is a binding site for GTP.

This sequence belongs to the RapZ-like family.

Displays ATPase and GTPase activities. The protein is Nucleotide-binding protein NTHI1314 of Haemophilus influenzae (strain 86-028NP).